Reading from the N-terminus, the 267-residue chain is Methylglyoxal reductase DkgB (267 aa).

Residue Tyr-39 is the Proton donor of the active site. His-97 lines the substrate pocket. Residue 179-231 (MTLAYGKALKDEVIARIAAKHNATPAQVILAWAMGEGYSVIPSSTKRENLESN) participates in NADP(+) binding.

It belongs to the aldo/keto reductase family. As to quaternary structure, monomer.

It is found in the cytoplasm. It catalyses the reaction hydroxyacetone + NADP(+) = methylglyoxal + NADPH + H(+). Aldo-keto reductase that significantly contributes to cellular methylglyoxal detoxification by catalyzing the NADPH-dependent conversion of methylglyoxal to acetol. This Escherichia coli O157:H7 protein is Methylglyoxal reductase DkgB.